Consider the following 293-residue polypeptide: Nucleotide-binding protein OB2468 (293 aa).

14-21 is a binding site for ATP; sequence GMSGAGKT. Position 65-68 (65-68) interacts with GTP; the sequence is DLRG.

This sequence belongs to the RapZ-like family.

Functionally, displays ATPase and GTPase activities. The protein is Nucleotide-binding protein OB2468 of Oceanobacillus iheyensis (strain DSM 14371 / CIP 107618 / JCM 11309 / KCTC 3954 / HTE831).